Here is a 144-residue protein sequence, read N- to C-terminus: uncharacterized protein (144 aa).

The signal sequence occupies residues 1–16; that stretch reads MRKFLIVLLLPLLVLA.

This is an uncharacterized protein from Aquifex aeolicus (strain VF5).